Consider the following 465-residue polypeptide: Adenosylhomocysteinase (465 aa).

Threonine 56, aspartate 131, and glutamate 191 together coordinate substrate. 192–194 (TTT) lines the NAD(+) pocket. Positions 221 and 225 each coordinate substrate. NAD(+)-binding positions include asparagine 226, 255-260 (GYGDVG), glutamate 278, asparagine 313, 334-336 (IGH), and asparagine 379.

It belongs to the adenosylhomocysteinase family. The cofactor is NAD(+).

It is found in the cytoplasm. It catalyses the reaction S-adenosyl-L-homocysteine + H2O = L-homocysteine + adenosine. The protein operates within amino-acid biosynthesis; L-homocysteine biosynthesis; L-homocysteine from S-adenosyl-L-homocysteine: step 1/1. In terms of biological role, may play a key role in the regulation of the intracellular concentration of adenosylhomocysteine. The sequence is that of Adenosylhomocysteinase from Bartonella tribocorum (strain CIP 105476 / IBS 506).